Consider the following 113-residue polypeptide: Large ribosomal subunit protein uL22 (113 aa).

This sequence belongs to the universal ribosomal protein uL22 family. As to quaternary structure, part of the 50S ribosomal subunit.

Its function is as follows. This protein binds specifically to 23S rRNA; its binding is stimulated by other ribosomal proteins, e.g. L4, L17, and L20. It is important during the early stages of 50S assembly. It makes multiple contacts with different domains of the 23S rRNA in the assembled 50S subunit and ribosome. Functionally, the globular domain of the protein is located near the polypeptide exit tunnel on the outside of the subunit, while an extended beta-hairpin is found that lines the wall of the exit tunnel in the center of the 70S ribosome. This is Large ribosomal subunit protein uL22 from Geobacillus thermodenitrificans (strain NG80-2).